The sequence spans 3974 residues: Hybrid PKS-NRPS synthetase 1 (3974 aa).

Residues 5–442 (SQKIAIIGSA…GTNAHCLIES (438 aa)) form the Ketosynthase family 3 (KS3) domain. Active-site for beta-ketoacyl synthase activity residues include cysteine 179, histidine 316, and histidine 362. Residues 561 to 883 (IFTGQGAQWA…TGILERGLDD (323 aa)) form a malonyl-CoA:ACP transacylase (MAT) domain region. Residues 954-1079 (HPLLGSRLSA…HDSELGIPES (126 aa)) are N-terminal hotdog fold. A dehydratase (DH) domain region spans residues 954 to 1251 (HPLLGSRLSA…QVESVKLVPV (298 aa)). The PKS/mFAS DH domain occupies 954-1257 (HPLLGSRLSA…LVPVITPDAS (304 aa)). Histidine 986 serves as the catalytic Proton acceptor; for dehydratase activity. Residues 1107-1257 (TTPISSAKIY…LVPVITPDAS (151 aa)) are C-terminal hotdog fold. The active-site Proton donor; for dehydratase activity is aspartate 1165. The tract at residues 1398–1529 (PWNTELRNAI…GYLLLVAKTG (132 aa)) is methyltransferase (MT) domain. The interval 2108 to 2282 (TYFLAGMTDS…ASIMDTGVVT (175 aa)) is ketoreductase (KR) domain. The segment at 2492 to 2516 (AGRSASPGASCSDRSLSTRSDETRS) is disordered. Polar residues predominate over residues 2498–2509 (PGASCSDRSLST). The condensation (C) domain stretch occupies residues 2560–2994 (APLSPGQAQL…LERLRTSSDQ (435 aa)). The tract at residues 3021–3423 (DAMAEKYFDQ…DGSLILLGRM (403 aa)) is adenylation (A) (KR) domain. The region spanning 3537–3613 (SADQLVEAEV…EMAEKMASVR (77 aa)) is the Carrier domain. At serine 3573 the chain carries O-(pantetheine 4'-phosphoryl)serine. A reductase (RED) domain region spans residues 3657–3940 (VVLTGAADLL…KLEMGEWIAL (284 aa)).

It in the C-terminal section; belongs to the NRP synthetase family.

Its pathway is secondary metabolite biosynthesis. Its function is as follows. Hybrid PKS-NRPS synthetase; part of the hps1-dma1 gene cluster that probably mediates the biosynthesis a derivative of cyclopiazonic acid (CPA). The hybrid polyketide synthase-nonribosomal peptide synthetase (PKS-NRPS) nps1 might incorporates acetyl-CoA, malonyl-CoA, and tryptophan (Trp) and utilizes a C-terminal redox-incompetent reductase domain to make and release the tryptophan tetramic acid, cyclo-acetoacetyl-L-tryptophan (c-AATrp), as the first intermediate in the pathway. In addition, the cluster also includes the tryptophan dimethylallyltransferase dma1, the FAD-dependent oxidoreductase toxD, the cytochrome P450 monooxygenase cyp3.1 and the methyltransferase DOTSEDRAFT_139328; the latter 2 being not present in all CPA-producing fungi but involved in additional modifications that occur in biosynthesis the of a range of CPA and CPA-like products. Further studies are required to clarify whether the CPA-like hps1-dma1 cluster is functional or a non-functional relic reflecting evolution of D.septosporum. This is Hybrid PKS-NRPS synthetase 1 from Dothistroma septosporum (strain NZE10 / CBS 128990) (Red band needle blight fungus).